Here is an 843-residue protein sequence, read N- to C-terminus: Protein kintoun (843 aa).

4 disordered regions span residues 212–242, 371–417, 545–672, and 761–843; these read PTAE…VHPM, FSRE…PVHS, YTVK…GASQ, and KKNQ…DDVM. Phosphoserine is present on Ser-376. A compositionally biased stretch (acidic residues) spans 387–397; sequence PVEEEEADADL. Basic and acidic residues predominate over residues 564 to 573; sequence VKFDHNKESL. Over residues 584 to 593 the composition is skewed to acidic residues; that stretch reads TEEDEVEEQH. A compositionally biased stretch (basic residues) spans 605 to 619; sequence QNKKPSKKQRKRNKK. A compositionally biased stretch (polar residues) spans 658–671; it reads YSECNDSSVGSGAS. Residues 761–775 show a composition bias toward basic residues; the sequence is KKNQKRRDLKLRAQQ. Ser-779 is subject to Phosphoserine.

It belongs to the PIH1 family. Kintoun subfamily. As to quaternary structure, interacts with Pp1alpha-96A, Pp1-87B, Pp1-13C and flw.

The protein resides in the cytoplasm. Its function is as follows. Required for cytoplasmic pre-assembly of axonemal dyneins, thereby playing a central role in motility in cilia and flagella. Involved in pre-assembly of dynein arm complexes in the cytoplasm before intraflagellar transport loads them for the ciliary compartment. This Drosophila ananassae (Fruit fly) protein is Protein kintoun.